Reading from the N-terminus, the 469-residue chain is Siroheme synthase (469 aa).

The tract at residues 1 to 203 (MDYLPIFTDL…GQEQDAKQEL (203 aa)) is precorrin-2 dehydrogenase /sirohydrochlorin ferrochelatase. Residues 22 to 23 (DV) and 43 to 44 (PV) each bind NAD(+). Serine 128 bears the Phosphoserine mark. Positions 214-469 (GQVALIGSGP…LQQSAVVKLA (256 aa)) are uroporphyrinogen-III C-methyltransferase. S-adenosyl-L-methionine is bound at residue proline 223. The active-site Proton acceptor is the aspartate 246. Residue lysine 268 is the Proton donor of the active site. S-adenosyl-L-methionine-binding positions include 299–301 (GGD), valine 304, 329–330 (TA), methionine 381, and glycine 410.

The protein in the N-terminal section; belongs to the precorrin-2 dehydrogenase / sirohydrochlorin ferrochelatase family. In the C-terminal section; belongs to the precorrin methyltransferase family.

It carries out the reaction uroporphyrinogen III + 2 S-adenosyl-L-methionine = precorrin-2 + 2 S-adenosyl-L-homocysteine + H(+). The catalysed reaction is precorrin-2 + NAD(+) = sirohydrochlorin + NADH + 2 H(+). The enzyme catalyses siroheme + 2 H(+) = sirohydrochlorin + Fe(2+). The protein operates within cofactor biosynthesis; adenosylcobalamin biosynthesis; precorrin-2 from uroporphyrinogen III: step 1/1. It participates in cofactor biosynthesis; adenosylcobalamin biosynthesis; sirohydrochlorin from precorrin-2: step 1/1. It functions in the pathway porphyrin-containing compound metabolism; siroheme biosynthesis; precorrin-2 from uroporphyrinogen III: step 1/1. Its pathway is porphyrin-containing compound metabolism; siroheme biosynthesis; siroheme from sirohydrochlorin: step 1/1. The protein operates within porphyrin-containing compound metabolism; siroheme biosynthesis; sirohydrochlorin from precorrin-2: step 1/1. Its function is as follows. Multifunctional enzyme that catalyzes the SAM-dependent methylations of uroporphyrinogen III at position C-2 and C-7 to form precorrin-2 via precorrin-1. Then it catalyzes the NAD-dependent ring dehydrogenation of precorrin-2 to yield sirohydrochlorin. Finally, it catalyzes the ferrochelation of sirohydrochlorin to yield siroheme. This Photobacterium profundum (strain SS9) protein is Siroheme synthase.